We begin with the raw amino-acid sequence, 1134 residues long: Ankyrin repeat and SAM domain-containing protein 1A (1134 aa).

At Gly2 the chain carries N-acetylglycine. Positions 33–55 (GGGGGGGSGGGGGGSGGGGGGLG) are enriched in gly residues. A disordered region spans residues 33-57 (GGGGGGGSGGGGGGSGGGGGGLGSS). ANK repeat units lie at residues 79–108 (TGYT…LTNV), 112–141 (KGCY…SHTR), 148–177 (DNET…DPTM), 181–210 (KFET…NLLS), 214–243 (KKHT…DSNY), and 246–275 (EMGS…DVNI). A compositionally biased stretch (basic and acidic residues) spans 305–317 (HMTGKRSTKEVDK). 3 disordered regions span residues 305–338 (HMTG…KSQG), 375–422 (SMAS…EEDH), and 469–498 (VDGK…VPEQ). A Phosphothreonine modification is found at Thr318. Over residues 328-337 (SMDSISQKSQ) the composition is skewed to polar residues. Positions 382–392 (SDQDSTNKEAE) are enriched in basic and acidic residues. Residue Ser507 is modified to Phosphoserine. Residues 569–650 (LTGLPTTNSR…MGSRSESLSN (82 aa)) form a disordered region. Polar residues predominate over residues 572-588 (LPTTNSRSHPETLTHTA). A compositionally biased stretch (basic and acidic residues) spans 613–628 (PKAELKLSRSLSKSDS). A phosphoserine mark is found at Ser620, Ser622, Ser624, Ser626, Ser628, Ser647, Ser661, Ser663, Ser666, and Ser677. Polar residues predominate over residues 633-650 (CSPTEDATMGSRSESLSN). SAM domains are found at residues 696 to 762 (TLEQ…LPKV) and 770 to 837 (NSPP…YEEP). The span at 856–868 (TSSPLSQNDSCTG) shows a compositional bias: polar residues. Disordered stretches follow at residues 856-896 (TSSP…APSR) and 1079-1134 (AEMI…LSTN). A Phosphoserine modification is found at Ser887. Residues 936–1091 (IFESCGYEAN…IETKSSKPVP (156 aa)) form the PID domain. Over residues 1123–1134 (PKPDSKRSLSTN) the composition is skewed to basic and acidic residues.

Interacts (via SAM domain) with EPHA2 (via SAM domain). Interacts with EPHA8; EPHA8 kinase activity-independent but stimulated by EPHA8 ubiquitination. Interacts (via SAM domain) with EPHA6 (via SAM domain). Post-translationally, phosphorylated on tyrosine residues in response to EGF and PDGF. As to expression, widely expressed (at protein level).

The protein resides in the cytoplasm. Its subcellular location is the cell projection. Functionally, regulator of different signaling pathways. Regulates EPHA8 receptor tyrosine kinase signaling to control cell migration and neurite retraction. The protein is Ankyrin repeat and SAM domain-containing protein 1A (ANKS1A) of Homo sapiens (Human).